Reading from the N-terminus, the 194-residue chain is Fe/S biogenesis protein NfuA (194 aa).

Positions 151 and 154 each coordinate [4Fe-4S] cluster.

This sequence belongs to the NfuA family. As to quaternary structure, homodimer. Requires [4Fe-4S] cluster as cofactor.

In terms of biological role, involved in iron-sulfur cluster biogenesis. Binds a 4Fe-4S cluster, can transfer this cluster to apoproteins, and thereby intervenes in the maturation of Fe/S proteins. Could also act as a scaffold/chaperone for damaged Fe/S proteins. This Mannheimia succiniciproducens (strain KCTC 0769BP / MBEL55E) protein is Fe/S biogenesis protein NfuA.